A 114-amino-acid chain; its full sequence is rRNA-processing protein cgrA (114 aa).

The span at 1 to 13 shows a compositional bias: low complexity; the sequence is MSSAAPAPSTHAA. Disordered regions lie at residues 1 to 47 and 77 to 114; these read MSSA…AARK and RRAAKEEKERYEKMAEKMHRKRVERLKKREKRNKLLNS. Residues 40-101 adopt a coiled-coil conformation; the sequence is TKRAAARKEQ…EKMHRKRVER (62 aa). Over residues 77–93 the composition is skewed to basic and acidic residues; that stretch reads RRAAKEEKERYEKMAEK. Basic residues predominate over residues 94 to 114; sequence MHRKRVERLKKREKRNKLLNS.

Belongs to the CGR1 family.

It is found in the nucleus. The protein resides in the nucleolus. In terms of biological role, involved in nucleolar integrity and required for processing of the pre-rRNA for the 60S ribosome subunit. In Emericella nidulans (strain FGSC A4 / ATCC 38163 / CBS 112.46 / NRRL 194 / M139) (Aspergillus nidulans), this protein is rRNA-processing protein cgrA (cgrA).